Reading from the N-terminus, the 217-residue chain is Probable transaldolase (217 aa).

The active-site Schiff-base intermediate with substrate is K83.

Belongs to the transaldolase family. Type 3B subfamily.

Its subcellular location is the cytoplasm. The catalysed reaction is D-sedoheptulose 7-phosphate + D-glyceraldehyde 3-phosphate = D-erythrose 4-phosphate + beta-D-fructose 6-phosphate. The protein operates within carbohydrate degradation; pentose phosphate pathway; D-glyceraldehyde 3-phosphate and beta-D-fructose 6-phosphate from D-ribose 5-phosphate and D-xylulose 5-phosphate (non-oxidative stage): step 2/3. Its function is as follows. Transaldolase is important for the balance of metabolites in the pentose-phosphate pathway. The chain is Probable transaldolase from Erythrobacter litoralis (strain HTCC2594).